Reading from the N-terminus, the 438-residue chain is LIM domain-containing protein C4F6.12 (438 aa).

Disordered regions lie at residues 1-37 (MHSP…NNLV) and 49-78 (TGGR…TIKQ). Residues 24–37 (SPVSTNGSPLNNLV) show a composition bias toward polar residues. Residues serine 67 and serine 96 each carry the phosphoserine modification. LIM zinc-binding domains are found at residues 256-316 (KSCH…QFSP), 318-375 (CKHC…NKYA), and 376-435 (VKCK…SVKF).

The chain is LIM domain-containing protein C4F6.12 from Schizosaccharomyces pombe (strain 972 / ATCC 24843) (Fission yeast).